Reading from the N-terminus, the 528-residue chain is GMP synthase [glutamine-hydrolyzing] (528 aa).

The 192-residue stretch at 13 to 204 folds into the Glutamine amidotransferase type-1 domain; sequence SILILDFGSQ…VYGISSCVAD (192 aa). The active-site Nucleophile is Cys-90. Active-site residues include His-178 and Glu-180. Residues 205-403 enclose the GMPS ATP-PPase domain; sequence WTTETYIEET…LGLPDEIIKR (199 aa). 232-238 provides a ligand contact to ATP; it reads SGGVDSS.

In terms of assembly, homodimer.

It catalyses the reaction XMP + L-glutamine + ATP + H2O = GMP + L-glutamate + AMP + diphosphate + 2 H(+). It functions in the pathway purine metabolism; GMP biosynthesis; GMP from XMP (L-Gln route): step 1/1. In terms of biological role, catalyzes the synthesis of GMP from XMP. The sequence is that of GMP synthase [glutamine-hydrolyzing] from Prochlorococcus marinus (strain MIT 9312).